Consider the following 207-residue polypeptide: MSVYAVGLTGGIACGKSLLAQLFEALNTTVVDADIIARQVVEPGPVLNCIVARFGSKILRADGCLDRRFLRQRVFADVAERKALEAIVHPVIRSGLKQAAAAAAGPYVLVVIPLLAEAGGRIGYPWLQRILVVDAIPEVQHARLMQRDSIDAEQASLMIAAQIGRKERLAIADDIVFNDGDPVHLGGQVCNLDARYRALASVFSDVD.

The region spanning 5-203 (AVGLTGGIAC…ARYRALASVF (199 aa)) is the DPCK domain. Residue 13–18 (ACGKSL) participates in ATP binding.

Belongs to the CoaE family.

The protein resides in the cytoplasm. It carries out the reaction 3'-dephospho-CoA + ATP = ADP + CoA + H(+). It participates in cofactor biosynthesis; coenzyme A biosynthesis; CoA from (R)-pantothenate: step 5/5. Functionally, catalyzes the phosphorylation of the 3'-hydroxyl group of dephosphocoenzyme A to form coenzyme A. In Xylella fastidiosa (strain 9a5c), this protein is Dephospho-CoA kinase.